The primary structure comprises 287 residues: Ethanolamine ammonia-lyase small subunit (287 aa).

The adenosylcob(III)alamin site is built by V168, E189, and C218.

This sequence belongs to the EutC family. As to quaternary structure, the basic unit is a heterodimer which dimerizes to form tetramers. The heterotetramers trimerize; 6 large subunits form a core ring with 6 small subunits projecting outwards. Adenosylcob(III)alamin is required as a cofactor.

The protein resides in the bacterial microcompartment. The catalysed reaction is ethanolamine = acetaldehyde + NH4(+). The protein operates within amine and polyamine degradation; ethanolamine degradation. In terms of biological role, catalyzes the deamination of various vicinal amino-alcohols to oxo compounds. Allows this organism to utilize ethanolamine as the sole source of nitrogen and carbon in the presence of external vitamin B12. This Pseudomonas syringae pv. tomato (strain ATCC BAA-871 / DC3000) protein is Ethanolamine ammonia-lyase small subunit.